The chain runs to 158 residues: Transcription elongation factor GreA (158 aa).

Belongs to the GreA/GreB family.

Its function is as follows. Necessary for efficient RNA polymerase transcription elongation past template-encoded arresting sites. The arresting sites in DNA have the property of trapping a certain fraction of elongating RNA polymerases that pass through, resulting in locked ternary complexes. Cleavage of the nascent transcript by cleavage factors such as GreA or GreB allows the resumption of elongation from the new 3'terminus. GreA releases sequences of 2 to 3 nucleotides. This Salmonella typhi protein is Transcription elongation factor GreA.